The following is a 495-amino-acid chain: Lysine--tRNA ligase (495 aa).

Glu406 and Glu413 together coordinate Mg(2+).

It belongs to the class-II aminoacyl-tRNA synthetase family. In terms of assembly, homodimer. Mg(2+) is required as a cofactor.

The protein localises to the cytoplasm. The catalysed reaction is tRNA(Lys) + L-lysine + ATP = L-lysyl-tRNA(Lys) + AMP + diphosphate. The polypeptide is Lysine--tRNA ligase (Staphylococcus aureus (strain MW2)).